The sequence spans 216 residues: MKFFLDTANIEEIKEAYSLGVISGVTTNPSLVAKEGRDFKEVIREIAEIVDGPISAEVISDDHEGMVKEARELAKIHKNIVIKIPMTAEGLKAVNILSKEGIKTNVTLIFSANQALLAARAGATYVSPFVGRLDDINTDGMQIIEDIVTIFTNYDIQAEIITASVRHPIHVLEAAKLGAHIATVPYKVLMQMIKHPLTDIGIERFKEDWKKAGLKI.

The Schiff-base intermediate with substrate role is filled by Lys83.

Belongs to the transaldolase family. Type 3B subfamily.

It is found in the cytoplasm. The enzyme catalyses D-sedoheptulose 7-phosphate + D-glyceraldehyde 3-phosphate = D-erythrose 4-phosphate + beta-D-fructose 6-phosphate. It functions in the pathway carbohydrate degradation; pentose phosphate pathway; D-glyceraldehyde 3-phosphate and beta-D-fructose 6-phosphate from D-ribose 5-phosphate and D-xylulose 5-phosphate (non-oxidative stage): step 2/3. In terms of biological role, transaldolase is important for the balance of metabolites in the pentose-phosphate pathway. This chain is Probable transaldolase, found in Caldanaerobacter subterraneus subsp. tengcongensis (strain DSM 15242 / JCM 11007 / NBRC 100824 / MB4) (Thermoanaerobacter tengcongensis).